The chain runs to 709 residues: Homeobox-leucine zipper protein TF1 (709 aa).

A DNA-binding region (homeobox) is located at residues Arg66–Cys125. Positions Asn166 to Ala187 form a coiled coil. An START domain is found at Gly212–Asp441.

Belongs to the HD-ZIP homeobox family. Class IV subfamily.

It localises to the nucleus. Functionally, probable transcription factor. This is Homeobox-leucine zipper protein TF1 (TF1) from Oryza sativa subsp. japonica (Rice).